The primary structure comprises 603 residues: Bud site selection protein 8 (603 aa).

A compositionally biased stretch (acidic residues) spans 1–10; sequence MIQSDEDNLD. Disordered stretches follow at residues 1–25, 83–150, and 190–212; these read MIQS…GTSS, ASTS…SPSS, and ANRG…EPNE. Residues 1-515 lie on the Extracellular side of the membrane; it reads MIQSDEDNLD…GFRDVYSIEN (515 aa). Composition is skewed to low complexity over residues 11 to 25 and 84 to 95; these read SSET…GTSS and STSSSSSSNSSS. N-linked (GlcNAc...) asparagine glycans are attached at residues asparagine 92, asparagine 110, asparagine 211, asparagine 240, asparagine 271, and asparagine 333. Over residues 96–115 the composition is skewed to polar residues; the sequence is ITQFHDTQDNNIPSNTTVRP. The tract at residues 286 to 479 is disordered; it reads AGSIKSSTSD…NRKEDRHDAE (194 aa). Residues 325-335 show a composition bias toward low complexity; it reads PSHNSDSSNES. Over residues 336–350 the composition is skewed to basic and acidic residues; that stretch reads SPKDHIGHNNEEKFS. Asparagine 396 and asparagine 423 each carry an N-linked (GlcNAc...) asparagine glycan. Residues 439–452 show a composition bias toward polar residues; it reads KSQSSESDTGQNSI. Residues 463 to 479 are compositionally biased toward basic and acidic residues; the sequence is KQQEKTDNRKEDRHDAE. A helical transmembrane segment spans residues 516 to 536; it reads IIVILLCCSIVPPLFFIIGCS. At 537–577 the chain is on the cytoplasmic side; the sequence is SRRKLVSDYRLMRLLMNKEHRAALLQGFIWDVDLRWFRMFC. A helical transmembrane segment spans residues 578 to 598; that stretch reads LILGAAETVIVMAGIAIGFGV. Residues 599–603 are Extracellular-facing; that stretch reads GITRE.

Belongs to the BUD8/9 family. In terms of assembly, interacts with RAX1 RAX2 at the proximal or distal pole in unbudded cells. N- and O-glycosylated.

It is found in the cell membrane. The protein resides in the bud tip. Its function is as follows. Involved in positioning the distal bud pole signal. The sequence is that of Bud site selection protein 8 from Saccharomyces cerevisiae (strain ATCC 204508 / S288c) (Baker's yeast).